The primary structure comprises 354 residues: Selection and upkeep of intraepithelial T-cells protein 1 (354 aa).

The 119-residue stretch at 23–141 folds into the Ig-like V-type 1 domain; it reads PSSEQFTVNS…EEAIAEVKVT (119 aa). Intrachain disulfides connect C49/C123 and C163/C217. An Ig-like C1-type 2 domain is found at 161–233; it reads VECNSEGWFP…TGQEERTSIV (73 aa). 3 helical membrane passes run 243–263, 283–303, and 326–346; these read SVWI…IMMP, LIGI…TITL, and MTVM…LVYF.

This sequence belongs to the SKINT family. In terms of tissue distribution, expressed in the thymus and skin.

The protein resides in the membrane. Its function is as follows. May act by engaging a cell surface molecule on immature T-cells in the embryonic thymus. The sequence is that of Selection and upkeep of intraepithelial T-cells protein 1 (SKINT1) from Macaca fascicularis (Crab-eating macaque).